A 485-amino-acid polypeptide reads, in one-letter code: Probable cytosol aminopeptidase (485 aa).

Residues Lys-251 and Asp-256 each contribute to the Mn(2+) site. Residue Lys-263 is part of the active site. The Mn(2+) site is built by Asp-274, Asp-333, and Glu-335. Arg-337 is an active-site residue.

Belongs to the peptidase M17 family. Requires Mn(2+) as cofactor.

It localises to the cytoplasm. It catalyses the reaction Release of an N-terminal amino acid, Xaa-|-Yaa-, in which Xaa is preferably Leu, but may be other amino acids including Pro although not Arg or Lys, and Yaa may be Pro. Amino acid amides and methyl esters are also readily hydrolyzed, but rates on arylamides are exceedingly low.. It carries out the reaction Release of an N-terminal amino acid, preferentially leucine, but not glutamic or aspartic acids.. In terms of biological role, presumably involved in the processing and regular turnover of intracellular proteins. Catalyzes the removal of unsubstituted N-terminal amino acids from various peptides. This is Probable cytosol aminopeptidase from Brucella melitensis biotype 1 (strain ATCC 23456 / CCUG 17765 / NCTC 10094 / 16M).